Consider the following 152-residue polypeptide: MMKKIDVKILDPRIGEEFPLPTYATPGSAGLDLRACLDNAVELAPGQTELLPTGLAIHIGDEQLAAVILPRSGLGHKHGVVLGNLVGLIDSDYQGQLMVSVWNRGDKAFTIQPGERIAQIVFVPVVQAEFNLVEDFETSERGSGGFGHSGRQ.

Residues 71–73 (RSG), asparagine 84, 88–90 (LID), and methionine 98 each bind substrate.

The protein belongs to the dUTPase family. Requires Mg(2+) as cofactor.

It carries out the reaction dUTP + H2O = dUMP + diphosphate + H(+). Its pathway is pyrimidine metabolism; dUMP biosynthesis; dUMP from dCTP (dUTP route): step 2/2. Functionally, this enzyme is involved in nucleotide metabolism: it produces dUMP, the immediate precursor of thymidine nucleotides and it decreases the intracellular concentration of dUTP so that uracil cannot be incorporated into DNA. In Photorhabdus laumondii subsp. laumondii (strain DSM 15139 / CIP 105565 / TT01) (Photorhabdus luminescens subsp. laumondii), this protein is Deoxyuridine 5'-triphosphate nucleotidohydrolase.